Consider the following 101-residue polypeptide: Large ribosomal subunit protein uL24 (101 aa).

Belongs to the universal ribosomal protein uL24 family. As to quaternary structure, part of the 50S ribosomal subunit.

Functionally, one of two assembly initiator proteins, it binds directly to the 5'-end of the 23S rRNA, where it nucleates assembly of the 50S subunit. Its function is as follows. One of the proteins that surrounds the polypeptide exit tunnel on the outside of the subunit. This is Large ribosomal subunit protein uL24 from Borreliella afzelii (strain PKo) (Borrelia afzelii).